The sequence spans 390 residues: GTPase Obg (390 aa).

The Obg domain maps to 1-159 (MKFVDEASIL…RELLLELMLL (159 aa)). Positions 127 to 147 (NTRFKSSVNRTPRQKTNGTPG) are disordered. Positions 129 to 145 (RFKSSVNRTPRQKTNGT) are enriched in polar residues. Residues 160-333 (ADVGMLGMPN…LCWDVMTFII (174 aa)) form the OBG-type G domain. GTP contacts are provided by residues 166 to 173 (GMPNAGKS), 191 to 195 (FTTLV), 213 to 216 (DIPG), 283 to 286 (NKID), and 314 to 316 (SAA). Mg(2+) contacts are provided by serine 173 and threonine 193.

The protein belongs to the TRAFAC class OBG-HflX-like GTPase superfamily. OBG GTPase family. In terms of assembly, monomer. Mg(2+) is required as a cofactor.

It is found in the cytoplasm. In terms of biological role, an essential GTPase which binds GTP, GDP and possibly (p)ppGpp with moderate affinity, with high nucleotide exchange rates and a fairly low GTP hydrolysis rate. Plays a role in control of the cell cycle, stress response, ribosome biogenesis and in those bacteria that undergo differentiation, in morphogenesis control. This is GTPase Obg from Escherichia coli (strain K12 / DH10B).